Reading from the N-terminus, the 940-residue chain is Isoleucine--tRNA ligase (940 aa).

The short motif at 58 to 68 (PYANGNIHIGH) is the 'HIGH' region element. Residue E563 participates in L-isoleucyl-5'-AMP binding. Positions 604–608 (KMSKS) match the 'KMSKS' region motif. K607 contacts ATP. Residues C903, C906, C923, and C926 each coordinate Zn(2+).

This sequence belongs to the class-I aminoacyl-tRNA synthetase family. IleS type 1 subfamily. In terms of assembly, monomer. Requires Zn(2+) as cofactor.

It localises to the cytoplasm. The catalysed reaction is tRNA(Ile) + L-isoleucine + ATP = L-isoleucyl-tRNA(Ile) + AMP + diphosphate. Functionally, catalyzes the attachment of isoleucine to tRNA(Ile). As IleRS can inadvertently accommodate and process structurally similar amino acids such as valine, to avoid such errors it has two additional distinct tRNA(Ile)-dependent editing activities. One activity is designated as 'pretransfer' editing and involves the hydrolysis of activated Val-AMP. The other activity is designated 'posttransfer' editing and involves deacylation of mischarged Val-tRNA(Ile). The polypeptide is Isoleucine--tRNA ligase (Buchnera aphidicola subsp. Acyrthosiphon pisum (strain 5A)).